The following is a 257-amino-acid chain: tRNA (cytidine/uridine/adenosine-2'-O-)-methyltransferase TrmJ (257 aa).

Residues 79–82 (TSAR), 115–117 (GRE), isoleucine 135, and 142–144 (GSL) contribute to the S-adenosyl-L-methionine site.

Belongs to the class IV-like SAM-binding methyltransferase superfamily. RNA methyltransferase TrmH family. As to quaternary structure, homodimer.

The protein localises to the cytoplasm. It carries out the reaction cytidine(32) in tRNA + S-adenosyl-L-methionine = 2'-O-methylcytidine(32) in tRNA + S-adenosyl-L-homocysteine + H(+). The catalysed reaction is uridine(32) in tRNA + S-adenosyl-L-methionine = 2'-O-methyluridine(32) in tRNA + S-adenosyl-L-homocysteine + H(+). The enzyme catalyses adenosine(32) in tRNA + S-adenosyl-L-methionine = 2'-O-methyladenosine(32) in tRNA + S-adenosyl-L-homocysteine + H(+). Catalyzes the formation of 2'O-methylated cytidine (Cm32), 2'O-methylated uridine (Um32) or 2'O-methylated adenosine (Am32) at position 32 in tRNA. Confers resistance to oxidative stress. The chain is tRNA (cytidine/uridine/adenosine-2'-O-)-methyltransferase TrmJ from Pseudomonas aeruginosa (strain UCBPP-PA14).